Consider the following 451-residue polypeptide: MLSPAMISLPWRPDAAEYYFSPLSSQPWAMLLHSGFAEHAHNRFDIIVAQPRATLVTHGQLTTLREGETVSTSAADPLTLVHQQLAHCNLQPQPHPHLPFLGGALGLFGYDLGRRFEHLPARADADIELPDMAVGIYDWALIVDHQRREVSLFSYDDPQARLAWLEAQTAPVAATFTLTSAWRANMSREEYGEKFRQIQAYLHSGDCYQVNLAQRFTATYRGDEWQAFRQLNRANRAPFSAFIRLDEGAVLSLSPERFIQLRQGDIQTRPIKGTLPRLADPEQDALQQQKLANSPKDRAENLMIVDLMRNDIGRVAEPGSVRVPELFVVEPFPAVHHLVSTVTARLPAHLHAADLLRAAFPGGSITGAPKVRAMEIIDELEPQRRNAWCGSIGYLSFCGNMDSSITIRTLTAWQGHLYCSAGGGIVADSEEAAEYQETFDKVNRILHQLES.

L-tryptophan contacts are provided by residues Ser34, 41–44 (HNRF), and 238–240 (PFS). Glu256 functions as the Proton donor in the catalytic mechanism. Catalysis depends on Lys272, which acts as the N6-(4-deoxychorismate)-lysine intermediate.

Belongs to the anthranilate synthase component I family. Monomer. Heterodimer consisting of two non-identical subunits: a glutamine amidotransferase subunit (PabA) and a aminodeoxychorismate synthase subunit (PabB). The cofactor is Mg(2+).

The catalysed reaction is chorismate + L-glutamine = 4-amino-4-deoxychorismate + L-glutamate. It functions in the pathway cofactor biosynthesis; tetrahydrofolate biosynthesis; 4-aminobenzoate from chorismate: step 1/2. Functionally, part of a heterodimeric complex that catalyzes the two-step biosynthesis of 4-amino-4-deoxychorismate (ADC), a precursor of p-aminobenzoate (PABA) and tetrahydrofolate. In the first step, a glutamine amidotransferase (PabA) generates ammonia as a substrate that, along with chorismate, is used in the second step, catalyzed by aminodeoxychorismate synthase (PabB) to produce ADC. The sequence is that of Aminodeoxychorismate synthase component 1 (pabB) from Klebsiella aerogenes (Enterobacter aerogenes).